The chain runs to 290 residues: MLKREMKPESDRPRKVRFRIASSHSGRVLKEVYEDGQPSGSLDSECASICGIDGLGDSDGQQNGHIESEGDENENDQDSLLVLARAASEKGFGTRRVNILSKNGTVRGVKYKVSAGQALFNNLTKVLQQPSTDLEFDRVVIYTTCLRVVRTTFERCELVRKIFQNHRVKFEEKNIALNGEYGKELDERCRRVSEAPSLPVVFIDGHYLGGAEKILSMNESGELQDILTKIERVQHPHECPSCGGFGFLPCSVCHGSKMSMFRNCFTDSFKALKCTACNENGLQRCKNCAG.

Positions Leu127–Gln234 constitute a Glutaredoxin domain.

Belongs to the GRXCR1 family. Expressed at low levels in adult lung, brain and duodenum with moderate levels in testis. Highly expressed in fetal cochlea.

It localises to the cell projection. The protein resides in the stereocilium. The protein localises to the microvillus. Its subcellular location is the kinocilium. Its function is as follows. May play a role in actin filament architecture in developing stereocilia of sensory cells. This Homo sapiens (Human) protein is Glutaredoxin domain-containing cysteine-rich protein 1 (GRXCR1).